The sequence spans 174 residues: UPF0340 protein SE_1711 (174 aa).

Belongs to the UPF0340 family.

This chain is UPF0340 protein SE_1711, found in Staphylococcus epidermidis (strain ATCC 12228 / FDA PCI 1200).